Here is a 134-residue protein sequence, read N- to C-terminus: Large ribosomal subunit protein uL22 (134 aa).

This sequence belongs to the universal ribosomal protein uL22 family. As to quaternary structure, part of the 50S ribosomal subunit. Contacts protein L32.

Functionally, this protein binds specifically to 23S rRNA; its binding is stimulated by other ribosomal proteins, e.g. L4, L17, and L20. It is important during the early stages of 50S assembly. It makes multiple contacts with different domains of the 23S rRNA in the assembled 50S subunit and ribosome. The globular domain of the protein is located by the polypeptide exit tunnel on the outside of the subunit while an extended beta-hairpin forms part of the wall of the tunnel. Forms a pair of 'tweezers' with L32 that hold together two different domains of the 23S rRNA. Interacts with the tunnel-blocking modified macrolide azithromycin. Upon binding of the macrolide troleadomycin to the ribosome, the tip of the beta-hairpin is displaced, which severely restricts the tunnel. This and experiments in E.coli have led to the suggestion that it is part of the gating mechanism involved in translation arrest in the absence of the protein export system. The chain is Large ribosomal subunit protein uL22 (rplV) from Deinococcus radiodurans (strain ATCC 13939 / DSM 20539 / JCM 16871 / CCUG 27074 / LMG 4051 / NBRC 15346 / NCIMB 9279 / VKM B-1422 / R1).